A 406-amino-acid chain; its full sequence is Tyrosine--tRNA ligase (406 aa).

Residue Y34 participates in L-tyrosine binding. The 'HIGH' region signature appears at P39–H48. Residues Y167 and Q171 each coordinate L-tyrosine. Residues K227–T231 carry the 'KMSKS' region motif. K230 provides a ligand contact to ATP. The S4 RNA-binding domain maps to R339–V404.

It belongs to the class-I aminoacyl-tRNA synthetase family. TyrS type 1 subfamily. In terms of assembly, homodimer.

Its subcellular location is the cytoplasm. The catalysed reaction is tRNA(Tyr) + L-tyrosine + ATP = L-tyrosyl-tRNA(Tyr) + AMP + diphosphate + H(+). Its function is as follows. Catalyzes the attachment of tyrosine to tRNA(Tyr) in a two-step reaction: tyrosine is first activated by ATP to form Tyr-AMP and then transferred to the acceptor end of tRNA(Tyr). This is Tyrosine--tRNA ligase from Caldanaerobacter subterraneus subsp. tengcongensis (strain DSM 15242 / JCM 11007 / NBRC 100824 / MB4) (Thermoanaerobacter tengcongensis).